The chain runs to 155 residues: uncharacterized protein (155 aa).

The Macro domain maps to 1–155 (MIVKYIKGDI…IVIVDWEPLL (155 aa)).

This is an uncharacterized protein from Escherichia coli (Bacteriophage T4).